A 78-amino-acid polypeptide reads, in one-letter code: Protein SlyX homolog (78 aa).

Belongs to the SlyX family.

This Xanthomonas oryzae pv. oryzae (strain MAFF 311018) protein is Protein SlyX homolog.